A 698-amino-acid polypeptide reads, in one-letter code: UvrABC system protein B (698 aa).

The Helicase ATP-binding domain maps to 35 to 210 (ARLQAGEKDI…TFRVRGDTVE (176 aa)). 48 to 55 (GATGTGKS) lines the ATP pocket. The short motif at 101–124 (YYDYYQPEAYVPSSDTYIEKDSSI) is the Beta-hairpin element. The Helicase C-terminal domain occupies 438–604 (QIDDLLAEIN…PLRKRIGDIT (167 aa)). The 36-residue stretch at 654 to 689 (AELIQELTDQMHVAAGELQFEVAARLRDEISDLKKE) folds into the UVR domain.

The protein belongs to the UvrB family. Forms a heterotetramer with UvrA during the search for lesions. Interacts with UvrC in an incision complex.

Its subcellular location is the cytoplasm. In terms of biological role, the UvrABC repair system catalyzes the recognition and processing of DNA lesions. A damage recognition complex composed of 2 UvrA and 2 UvrB subunits scans DNA for abnormalities. Upon binding of the UvrA(2)B(2) complex to a putative damaged site, the DNA wraps around one UvrB monomer. DNA wrap is dependent on ATP binding by UvrB and probably causes local melting of the DNA helix, facilitating insertion of UvrB beta-hairpin between the DNA strands. Then UvrB probes one DNA strand for the presence of a lesion. If a lesion is found the UvrA subunits dissociate and the UvrB-DNA preincision complex is formed. This complex is subsequently bound by UvrC and the second UvrB is released. If no lesion is found, the DNA wraps around the other UvrB subunit that will check the other stand for damage. The protein is UvrABC system protein B of Beutenbergia cavernae (strain ATCC BAA-8 / DSM 12333 / CCUG 43141 / JCM 11478 / NBRC 16432 / NCIMB 13614 / HKI 0122).